Consider the following 311-residue polypeptide: DNA replication terminus site-binding protein (311 aa).

Belongs to the Tus family.

It localises to the cytoplasm. In terms of biological role, trans-acting protein required for termination of DNA replication. Binds to DNA replication terminator sequences (terA to terF) to prevent the passage of replication forks. The termination efficiency will be affected by the affinity of this protein for the terminator sequence. This chain is DNA replication terminus site-binding protein, found in Yersinia pestis.